Consider the following 108-residue polypeptide: Thiosulfate sulfurtransferase GlpE (108 aa).

A Rhodanese domain is found at 18 to 106 (ENEGATLADI…WERSGLPIET (89 aa)). C66 acts as the Cysteine persulfide intermediate in catalysis.

This sequence belongs to the GlpE family.

It localises to the cytoplasm. It catalyses the reaction thiosulfate + hydrogen cyanide = thiocyanate + sulfite + 2 H(+). The catalysed reaction is thiosulfate + [thioredoxin]-dithiol = [thioredoxin]-disulfide + hydrogen sulfide + sulfite + 2 H(+). In terms of biological role, transferase that catalyzes the transfer of sulfur from thiosulfate to thiophilic acceptors such as cyanide or dithiols. May function in a CysM-independent thiosulfate assimilation pathway by catalyzing the conversion of thiosulfate to sulfite, which can then be used for L-cysteine biosynthesis. The polypeptide is Thiosulfate sulfurtransferase GlpE (Actinobacillus pleuropneumoniae serotype 5b (strain L20)).